Consider the following 67-residue polypeptide: Large ribosomal subunit protein bL31 (67 aa).

Residues C16, C18, C36, and C39 each contribute to the Zn(2+) site.

Belongs to the bacterial ribosomal protein bL31 family. Type A subfamily. As to quaternary structure, part of the 50S ribosomal subunit. It depends on Zn(2+) as a cofactor.

Functionally, binds the 23S rRNA. The sequence is that of Large ribosomal subunit protein bL31 from Syntrophomonas wolfei subsp. wolfei (strain DSM 2245B / Goettingen).